The following is a 2715-amino-acid chain: Cilia- and flagella-associated protein 46 (2715 aa).

TPR repeat units lie at residues Cys89–Glu122, Ala175–His208, Gly261–Glu295, Pro324–Asp359, Cys426–Gly459, Ser469–Asp503, Ser807–Ser845, Leu936–Tyr969, Ala1111–Thr1144, and Ala1174–Pro1211. A disordered region spans residues Ser1356–Lys1412. Positions Pro1361–Lys1403 are enriched in basic and acidic residues. Residues Lys1362–Glu1401 are a coiled coil. The TPR 11 repeat unit spans residues Ala1639 to Glu1672. Residues Val1781–Glu1810 are a coiled coil. 3 disordered regions span residues Glu2000–Arg2023, Ala2294–Val2319, and Glu2371–Ile2399. Composition is skewed to basic and acidic residues over residues Gly2300–Thr2311 and Glu2371–Arg2383. A compositionally biased stretch (basic residues) spans Asp2384 to Ser2398. TPR repeat units follow at residues Ile2399–Thr2432 and Val2504–Trp2537. The tract at residues Ala2541–Ala2567 is disordered. The segment covering Asp2546–Ser2559 has biased composition (basic and acidic residues).

It belongs to the CFAP46 family.

The protein localises to the cytoplasm. The protein resides in the cytoskeleton. It localises to the cilium axoneme. As part of the central apparatus of the cilium axoneme plays a role in cilium movement. In Homo sapiens (Human), this protein is Cilia- and flagella-associated protein 46.